Here is a 187-residue protein sequence, read N- to C-terminus: Urease accessory protein UreE (187 aa).

The interval 154 to 187 (RANSAQGHGHSHGHSHSHDHHGYHHHGDGNWHKH) is disordered. Residues 162-177 (GHSHGHSHSHDHHGYH) show a composition bias toward basic residues. Positions 178 to 187 (HHGDGNWHKH) are enriched in basic and acidic residues.

This sequence belongs to the UreE family.

The protein localises to the cytoplasm. Involved in urease metallocenter assembly. Binds nickel. Probably functions as a nickel donor during metallocenter assembly. In Actinobacillus pleuropneumoniae (Haemophilus pleuropneumoniae), this protein is Urease accessory protein UreE.